An 878-amino-acid chain; its full sequence is Serine/threonine-protein kinase D2 (878 aa).

The segment covering 1–12 (MATAPSYPAGLP) has biased composition (low complexity). The disordered stretch occupies residues 1–35 (MATAPSYPAGLPGSPGPGSPPPPGGLELQSPPPLL). Over residues 14 to 35 (SPGPGSPPPPGGLELQSPPPLL) the composition is skewed to pro residues. At serine 30 the chain carries Phosphoserine. Residue tyrosine 87 is modified to Phosphotyrosine. A Phorbol-ester/DAG-type 1 zinc finger spans residues 138-188 (PHALTVHSYRAPAFCDHCGEMLFGLVRQGLKCDGCGLNYHKRCAFSIPNNC). A phosphoserine mark is found at serine 197, serine 198, serine 200, serine 203, serine 206, serine 212, and serine 214. Residues 224 to 247 (RSTTELLPRRPPSSSSSSSASSYT) form a disordered region. A compositionally biased stretch (low complexity) spans 236–245 (SSSSSSSASS). Serine 244 is subject to Phosphoserine; by CSNK1D and CSNK1E. The Phorbol-ester/DAG-type 2 zinc finger occupies 264–314 (PHTFLIHSYTRPTVCQACKKLLKGLFRQGLQCKDCKFNCHKRCATRVPNDC). The segment at 343–373 (ESEDSGVIPGSHSENALHASEEEEGEGGKAQ) is disordered. In terms of domain architecture, PH spans 397-509 (TTLREGWVVH…WETAIRQALM (113 aa)). Residue tyrosine 407 is modified to Phosphotyrosine. Tyrosine 438 carries the phosphotyrosine; by ABL1 modification. Serine 518 bears the Phosphoserine mark. In terms of domain architecture, Protein kinase spans 551-807 (IFPDEVLGSG…VDKSLSHPWL (257 aa)). ATP-binding positions include 557–565 (LGSGQFGVV) and lysine 580. Aspartate 674 serves as the catalytic Proton acceptor. Serine 706 carries the post-translational modification Phosphoserine; by PKC. Serine 710 bears the Phosphoserine mark. Tyrosine 717 bears the Phosphotyrosine; by ABL1 mark. Positions 724 to 726 (LNQ) match the Important for ABL1-mediated Tyr-717 phosphorylation motif. The tract at residues 844-869 (HPLPGSGLPTDRDLGGACPPQDHDMQ) is disordered. The residue at position 876 (serine 876) is a Phosphoserine; by autocatalysis.

It belongs to the protein kinase superfamily. CAMK Ser/Thr protein kinase family. PKD subfamily. In terms of assembly, interacts (via C-terminus) with LCK. Interacts (via N-terminal AP-rich region) with CIB1 isoform 2. Interacts (via N-terminus and zing-finger domain 1 and 2) with PRKCD in response to oxidative stress; the interaction is independent of PRKD2 tyrosine phosphorylation. Mg(2+) serves as cofactor. Post-translationally, phosphorylation of Ser-876 correlates with the activation status of the kinase. Ser-706 or/and Ser-710 are probably phosphorylated by PKC. Phosphorylation at Ser-244 by CSNK1D and CSNK1E promotes nuclear localization and substrate targeting. Phosphorylation at Ser-244, Ser-706 and Ser-710 is required for nuclear localization. Phosphorylated at Tyr-438 by ABL1 in response to oxidative stress. Phosphorylated at Tyr-717 by ABL1 specifically in response to oxidative stress; requires prior phosphorylation at Ser-706 or/and Ser-710. Widely expressed.

The protein localises to the cytoplasm. The protein resides in the cell membrane. It localises to the nucleus. Its subcellular location is the golgi apparatus. It is found in the trans-Golgi network. It carries out the reaction L-seryl-[protein] + ATP = O-phospho-L-seryl-[protein] + ADP + H(+). The enzyme catalyses L-threonyl-[protein] + ATP = O-phospho-L-threonyl-[protein] + ADP + H(+). Activated by DAG and phorbol esters. Phorbol-ester/DAG-type domains bind DAG, mediating translocation to membranes. Autophosphorylation of Ser-710 and phosphorylation of Ser-706 by PKC relieves auto-inhibition by the PH domain. Catalytic activity is further increased by phosphorylation at Tyr-717 in response to oxidative stress. Functionally, serine/threonine-protein kinase that converts transient diacylglycerol (DAG) signals into prolonged physiological effects downstream of PKC, and is involved in the regulation of cell proliferation via MAPK1/3 (ERK1/2) signaling, oxidative stress-induced NF-kappa-B activation, inhibition of HDAC7 transcriptional repression, signaling downstream of T-cell antigen receptor (TCR) and cytokine production, and plays a role in Golgi membrane trafficking, angiogenesis, secretory granule release and cell adhesion. May potentiate mitogenesis induced by the neuropeptide bombesin by mediating an increase in the duration of MAPK1/3 (ERK1/2) signaling, which leads to accumulation of immediate-early gene products including FOS that stimulate cell cycle progression. In response to oxidative stress, is phosphorylated at Tyr-438 and Tyr-717 by ABL1, which leads to the activation of PRKD2 without increasing its catalytic activity, and mediates activation of NF-kappa-B. In response to the activation of the gastrin receptor CCKBR, is phosphorylated at Ser-244 by CSNK1D and CSNK1E, translocates to the nucleus, phosphorylates HDAC7, leading to nuclear export of HDAC7 and inhibition of HDAC7 transcriptional repression of NR4A1/NUR77. Upon TCR stimulation, is activated independently of ZAP70, translocates from the cytoplasm to the nucleus and is required for interleukin-2 (IL2) promoter up-regulation. During adaptive immune responses, is required in peripheral T-lymphocytes for the production of the effector cytokines IL2 and IFNG after TCR engagement and for optimal induction of antibody responses to antigens. In epithelial cells stimulated with lysophosphatidic acid (LPA), is activated through a PKC-dependent pathway and mediates LPA-stimulated interleukin-8 (IL8) secretion via a NF-kappa-B-dependent pathway. During TCR-induced T-cell activation, interacts with and is activated by the tyrosine kinase LCK, which results in the activation of the NFAT transcription factors. In the trans-Golgi network (TGN), regulates the fission of transport vesicles that are on their way to the plasma membrane and in polarized cells is involved in the transport of proteins from the TGN to the basolateral membrane. Plays an important role in endothelial cell proliferation and migration prior to angiogenesis, partly through modulation of the expression of KDR/VEGFR2 and FGFR1, two key growth factor receptors involved in angiogenesis. In secretory pathway, is required for the release of chromogranin-A (CHGA)-containing secretory granules from the TGN. Downstream of PRKCA, plays important roles in angiotensin-2-induced monocyte adhesion to endothelial cells. Plays a regulatory role in angiogenesis and tumor growth by phosphorylating a downstream mediator CIB1 isoform 2, resulting in vascular endothelial growth factor A (VEGFA) secretion. The polypeptide is Serine/threonine-protein kinase D2 (PRKD2) (Homo sapiens (Human)).